A 141-amino-acid polypeptide reads, in one-letter code: Nucleoside diphosphate kinase (141 aa).

Lysine 9, phenylalanine 57, arginine 85, threonine 91, arginine 102, and asparagine 112 together coordinate ATP. The active-site Pros-phosphohistidine intermediate is the histidine 115.

This sequence belongs to the NDK family. In terms of assembly, homotetramer. Mg(2+) serves as cofactor.

The protein localises to the cytoplasm. The enzyme catalyses a 2'-deoxyribonucleoside 5'-diphosphate + ATP = a 2'-deoxyribonucleoside 5'-triphosphate + ADP. The catalysed reaction is a ribonucleoside 5'-diphosphate + ATP = a ribonucleoside 5'-triphosphate + ADP. Major role in the synthesis of nucleoside triphosphates other than ATP. The ATP gamma phosphate is transferred to the NDP beta phosphate via a ping-pong mechanism, using a phosphorylated active-site intermediate. This chain is Nucleoside diphosphate kinase, found in Chloroherpeton thalassium (strain ATCC 35110 / GB-78).